The primary structure comprises 968 residues: RNA polymerase-associated protein RapA (968 aa).

The 171-residue stretch at 164–334 (DVGRRHAPRV…FARLRLLDPN (171 aa)) folds into the Helicase ATP-binding domain. Residue 177–184 (DEVGLGKT) coordinates ATP. Residues 280–283 (DEAH) carry the DEAH box motif. In terms of domain architecture, Helicase C-terminal spans 490–644 (RVEWLMGYLT…TCPTGRTIYD (155 aa)).

It belongs to the SNF2/RAD54 helicase family. RapA subfamily. Interacts with the RNAP. Has a higher affinity for the core RNAP than for the holoenzyme. Its ATPase activity is stimulated by binding to RNAP.

Functionally, transcription regulator that activates transcription by stimulating RNA polymerase (RNAP) recycling in case of stress conditions such as supercoiled DNA or high salt concentrations. Probably acts by releasing the RNAP, when it is trapped or immobilized on tightly supercoiled DNA. Does not activate transcription on linear DNA. Probably not involved in DNA repair. The polypeptide is RNA polymerase-associated protein RapA (Enterobacter sp. (strain 638)).